The primary structure comprises 216 residues: Lipoprotein-releasing system ATP-binding protein LolD (216 aa).

The 215-residue stretch at 2–216 (IHLEGITKSF…TIHMVDGNII (215 aa)) folds into the ABC transporter domain. 34-41 (GPSGAGKT) provides a ligand contact to ATP.

This sequence belongs to the ABC transporter superfamily. Lipoprotein translocase (TC 3.A.1.125) family. As to quaternary structure, the complex is composed of two ATP-binding proteins (LolD) and two transmembrane proteins (LolC and LolE).

Its subcellular location is the cell inner membrane. Part of the ABC transporter complex LolCDE involved in the translocation of mature outer membrane-directed lipoproteins, from the inner membrane to the periplasmic chaperone, LolA. Responsible for the formation of the LolA-lipoprotein complex in an ATP-dependent manner. The polypeptide is Lipoprotein-releasing system ATP-binding protein LolD (Bacteroides fragilis (strain YCH46)).